Here is a 208-residue protein sequence, read N- to C-terminus: Imidazoleglycerol-phosphate dehydratase (208 aa).

Belongs to the imidazoleglycerol-phosphate dehydratase family.

It carries out the reaction D-erythro-1-(imidazol-4-yl)glycerol 3-phosphate = 3-(imidazol-4-yl)-2-oxopropyl phosphate + H2O. It participates in amino-acid biosynthesis; L-histidine biosynthesis; L-histidine from 5-phospho-alpha-D-ribose 1-diphosphate: step 6/9. The polypeptide is Imidazoleglycerol-phosphate dehydratase (his3) (Trichoderma harzianum (Hypocrea lixii)).